The sequence spans 657 residues: uncharacterized protein (657 aa).

Active-site charge relay system residues include Ser518 and His631.

The protein belongs to the peptidase S9C family.

This is an uncharacterized protein from Bacillus subtilis (strain 168).